Here is a 241-residue protein sequence, read N- to C-terminus: Carboxy-S-adenosyl-L-methionine synthase (241 aa).

Residues tyrosine 38, 63-65 (GCS), 88-89 (DN), 116-117 (DI), asparagine 131, and arginine 198 contribute to the S-adenosyl-L-methionine site.

This sequence belongs to the class I-like SAM-binding methyltransferase superfamily. Cx-SAM synthase family. Homodimer.

The catalysed reaction is prephenate + S-adenosyl-L-methionine = carboxy-S-adenosyl-L-methionine + 3-phenylpyruvate + H2O. Catalyzes the conversion of S-adenosyl-L-methionine (SAM) to carboxy-S-adenosyl-L-methionine (Cx-SAM). This Haemophilus influenzae (strain PittGG) protein is Carboxy-S-adenosyl-L-methionine synthase.